We begin with the raw amino-acid sequence, 331 residues long: C4-dicarboxylate-binding periplasmic protein DctP (331 aa).

An N-terminal signal peptide occupies residues 1–23 (MLKHTAKALVCALSLTVAGIVQA).

It belongs to the bacterial solute-binding protein 7 family. As to quaternary structure, the complex comprises the extracytoplasmic solute receptor protein DctP, and the two transmembrane proteins DctQ and DctM.

It is found in the periplasm. Functionally, part of the tripartite ATP-independent periplasmic (TRAP) transport system DctPQM involved in C4-dicarboxylates uptake. In Pseudomonas aeruginosa (strain ATCC 15692 / DSM 22644 / CIP 104116 / JCM 14847 / LMG 12228 / 1C / PRS 101 / PAO1), this protein is C4-dicarboxylate-binding periplasmic protein DctP.